An 881-amino-acid polypeptide reads, in one-letter code: Beta-mannosidase (881 aa).

The N-terminal stretch at 1 to 18 (MHLHLLFLLALCGAGCMA) is a signal peptide. N-linked (GlcNAc...) asparagine glycosylation is found at Asn-35, Asn-77, Asn-89, and Asn-113. Cys-167 and Cys-176 are joined by a disulfide. Substrate is bound at residue 190–192 (WDW). 3 N-linked (GlcNAc...) asparagine glycosylation sites follow: Asn-226, Asn-297, and Asn-302. Asn-456 contacts substrate. Glu-457 acts as the Proton donor in catalysis. Disulfide bonds link Cys-540-Cys-629, Cys-732-Cys-761, and Cys-764-Cys-769. Glu-554 acts as the Nucleophile in catalysis. Residue Asn-803 is glycosylated (N-linked (GlcNAc...) asparagine).

This sequence belongs to the glycosyl hydrolase 2 family. As to quaternary structure, monomer.

Its subcellular location is the lysosome. It catalyses the reaction Hydrolysis of terminal, non-reducing beta-D-mannose residues in beta-D-mannosides.. Its pathway is glycan metabolism; N-glycan degradation. Its function is as follows. Exoglycosidase that cleaves the single beta-linked mannose residue from the non-reducing end of all N-linked glycoprotein oligosaccharides. This chain is Beta-mannosidase, found in Rattus norvegicus (Rat).